A 2169-amino-acid chain; its full sequence is Voltage-dependent L-type calcium channel subunit alpha-1C (2169 aa).

Residues 1 to 154 (MIRAFAQPST…RACISIVEWK (154 aa)) lie on the Cytoplasmic side of the membrane. A calmodulin-binding region spans residues 77–98 (GAALSWLAAIDAARQAKLMGSA). Positions 104–128 (STVSSTQRKRQQYGKPKKQGGTTAT) are disordered. A compositionally biased stretch (basic residues) spans 110-121 (QRKRQQYGKPKK). Residues 141–438 (NPIRRACISI…LVLGVLSGEF (298 aa)) form an I repeat. Residues 155–173 (PFEIIILLTIFANCVALAI) traverse the membrane as a helical segment. At 174–188 (YIPFPEDDSNATNSN) the chain is on the extracellular side. N183 carries N-linked (GlcNAc...) asparagine glycosylation. A helical transmembrane segment spans residues 189–209 (LERVEYLFLIIFTVEAFLKVI). Topologically, residues 210 to 218 (AYGLLFHPN) are cytoplasmic. A helical transmembrane segment spans residues 219-239 (AYLRNGWNLLDFIIVVVGLFS). Residues 240–262 (AILEQATKADGANALGGKGAGFD) lie on the Extracellular side of the membrane. The chain crosses the membrane as a helical span at residues 263 to 281 (VKALRAFRVLRPLRLVSGV). The Cytoplasmic segment spans residues 282-298 (PSLQVVLNSIIKAMVPL). The helical transmembrane segment at 299–320 (LHIALLVLFVIIIYAIIGLELF) threads the bilayer. Topologically, residues 321-380 (MGKMHKTCYNQEGIIDVPAEEDPSPCALETGHGRQCQNGTVCKPGWDGPKHGITNFDNFA) are extracellular. Intrachain disulfides connect C328/C356 and C346/C362. An N-linked (GlcNAc...) asparagine glycan is attached at N358. The pore-forming intramembrane region spans 381–402 (FAMLTVFQCITMEGWTDVLYWM). A Selectivity filter of repeat I motif is present at residues 391–394 (TMEG). E393 lines the Ca(2+) pocket. Over 403-410 (QDAMGYEL) the chain is Extracellular. The chain crosses the membrane as a helical span at residues 411 to 431 (PWVYFVSLVIFGSFFVLNLVL). Topologically, residues 432-554 (GVLSGEFSKE…RKCRAAVKSN (123 aa)) are cytoplasmic. The AID/alpha-interaction domain; mediates interaction with the beta subunit stretch occupies residues 458–475 (QQLEEDLKGYLDWITQAE). The tract at residues 479–511 (PENEDEGMDEDKPRNMSMPTSETESVNTENVAG) is disordered. A compositionally biased stretch (polar residues) spans 495–508 (SMPTSETESVNTEN). Position 499 is a phosphoserine (S499). T506 carries the post-translational modification Phosphothreonine. The II repeat unit spans residues 540–786 (NRFCRRKCRA…LFLAIAVDNL (247 aa)). A helical membrane pass occupies residues 555–573 (VFYWLVIFLVFLNTLTIAS). Topologically, residues 574-584 (EHYNQPHWLTE) are extracellular. Residues 585–605 (VQDTANKALLALFTAEMLLKM) traverse the membrane as a helical segment. The Cytoplasmic portion of the chain corresponds to 606-616 (YSLGLQAYFVS). The chain crosses the membrane as a helical span at residues 617–636 (LFNRFDCFIVCGGILETILV). Topologically, residues 637–645 (ETKIMSPLG) are extracellular. The helical transmembrane segment at 646–664 (ISCWRCVRLLRIFKITRYW) threads the bilayer. Residues 665 to 683 (NSLSNLVASLLNSLRSIAS) are Cytoplasmic-facing. A helical transmembrane segment spans residues 684-703 (LLLLLFLFIIIFSLLGMQLF). The Extracellular portion of the chain corresponds to 704–723 (GGKFNFDEMQTRRSTFDNFP). Positions 724 to 745 (QSLLTVFQILTGEDWNSVMYDG) form an intramembrane region, pore-forming. A Selectivity filter of repeat II motif is present at residues 734 to 737 (TGED). Residue E736 coordinates Ca(2+). The Extracellular portion of the chain corresponds to 746–755 (IMAYGGPSFP). The helical transmembrane segment at 756-775 (GMLVCIYFIILFISPNYILL) threads the bilayer. The Cytoplasmic segment spans residues 776–930 (NLFLAIAVDN…LQCHRIVNDT (155 aa)). Residues 794–891 (SAQKEEEEEK…EMPVGPRPRP (98 aa)) are disordered. The segment covering 813–836 (SPEKKQEVMEKPAVEESKEEKIEL) has biased composition (basic and acidic residues). S838 and S845 each carry phosphoserine. The interval 859–906 (SENEDKSPHSNPDTAGEEDEEEPEMPVGPRPRPLSELHLKEKAVPMPE) is interaction with STAC2. Over residues 873-882 (AGEEDEEEPE) the composition is skewed to acidic residues. The stretch at 917-1198 (NRFRLQCHRI…IFVGFVIVTF (282 aa)) is one III repeat. A helical transmembrane segment spans residues 931 to 949 (IFTNLILFFILLSSISLAA). The Extracellular portion of the chain corresponds to 950–961 (EDPVQHTSFRNH). A helical transmembrane segment spans residues 962–981 (ILFYFDIVFTTIFTIEIALK). Topologically, residues 982 to 997 (MTAYGAFLHKGSFCRN) are cytoplasmic. The helical transmembrane segment at 998–1016 (YFNILDLLVVSVSLISFGI) threads the bilayer. The Extracellular portion of the chain corresponds to 1017–1023 (QSSAINV). The helical transmembrane segment at 1024–1041 (VKILRVLRVLRPLRINRA) threads the bilayer. At 1042-1060 (KGLKHVVQCVFVAIRTIGN) the chain is on the cytoplasmic side. A helical membrane pass occupies residues 1061 to 1080 (IVIVTTLLQFMFACIGVQLF). Residues 1081–1130 (KGKLYTCSDSSKQTEAESKGNYITYKTGEVDHPIIQPRSWENSKFDFDNV) are Extracellular-facing. Positions 1118 to 1207 (RSWENSKFDF…FQEQGEQEYK (90 aa)) are dihydropyridine binding. An intramembrane region (pore-forming) is located at residues 1131 to 1151 (LAAMMALFTVSTFEGWPELLY). The Selectivity filter of repeat III signature appears at 1142–1145 (TFEG). E1144 lines the Ca(2+) pocket. The Extracellular segment spans residues 1152-1168 (RSIDSHTEDKGPIYNYR). The helical transmembrane segment at 1169 to 1190 (VEISIFFIIYIIIIAFFMMNIF) threads the bilayer. The Cytoplasmic segment spans residues 1191–1248 (VGFVIVTFQEQGEQEYKNCELDKNQRQCVEYALKARPLPRYIPKNQHQYKVWYVVNST). The stretch at 1235–1508 (NQHQYKVWYV…LFVAVIMDNF (274 aa)) is one IV repeat. Residues 1249 to 1270 (YFEYLMFVLILLNTICLAMQHY) form a helical membrane-spanning segment. Residues 1271–1278 (GQSCLFKI) lie on the Extracellular side of the membrane. Residues 1279-1300 (AMNILNMLFTGLFTVEMILKLI) traverse the membrane as a helical segment. Residues 1301–1310 (AFKPKHYFCD) are Cytoplasmic-facing. A helical membrane pass occupies residues 1311–1330 (AWNTFDALIVVGSIVDIAIT). The Extracellular portion of the chain corresponds to 1331–1353 (EVHPAEHTQCSPSMSAEENSRIS). The helical transmembrane segment at 1354-1372 (ITFFRLFRVMRLVKLLSRG) threads the bilayer. The Cytoplasmic segment spans residues 1373–1390 (EGIRTLLWTFIKSFQALP). A helical membrane pass occupies residues 1391–1411 (YVALLIVMLFFIYAVIGMQVF). The Extracellular segment spans residues 1412–1433 (GKIALNDTTEINRNNNFQTFPQ). N1417 carries an N-linked (GlcNAc...) asparagine glycan. The segment at residues 1434 to 1452 (AVLLLFRCATGEAWQDIML) is an intramembrane region (pore-forming). The Selectivity filter of repeat IV motif lies at 1443–1446 (TGEA). Residues 1453–1480 (ACMPGKKCAPESEPSNSTEGETPCGSSF) are Extracellular-facing. The dihydropyridine binding stretch occupies residues 1459-1527 (KCAPESEPSN…LGPHHLDEFK (69 aa)). C1460 and C1476 are oxidised to a cystine. N-linked (GlcNAc...) asparagine glycosylation is present at N1468. Residues 1473 to 1515 (ETPCGSSFAVFYFISFYMLCAFLIINLFVAVIMDNFDYLTRDW) are phenylalkylamine binding. The chain crosses the membrane as a helical span at residues 1481–1505 (AVFYFISFYMLCAFLIINLFVAVIM). The Cytoplasmic portion of the chain corresponds to 1506 to 2169 (DNFDYLTRDW…PDSRSYVSNL (664 aa)). The important for interaction with STAC1, STAC2 and STAC3 stretch occupies residues 1640-1667 (DEVTVGKFYATFLIQEYFRKFKKRKEQG). Residues 1640-1673 (DEVTVGKFYATFLIQEYFRKFKKRKEQGLVGKPS) are calmodulin-binding. Residues 1646–1666 (KFYATFLIQEYFRKFKKRKEQ) are calmodulin-binding IQ region. Positions 1680-1699 (LQAGLRTLHDIGPEIRRAIS) are important for localization in at the junctional membrane. 2 positions are modified to phosphoserine: S1699 and S1720. 2 stretches are compositionally biased toward polar residues: residues 1761–1770 (KTGNNQADTE) and 1780–1792 (STFT…STGS). The disordered stretch occupies residues 1761 to 1793 (KTGNNQADTESPSHEKLVDSTFTPSSYSSTGSN). The residue at position 1927 (S1927) is a Phosphoserine; by PKA. The disordered stretch occupies residues 1970-1998 (RSHSPSTFPRPRPTPPVTPGSRGRPLQPI). A compositionally biased stretch (pro residues) spans 1977 to 1987 (FPRPRPTPPVT).

Belongs to the calcium channel alpha-1 subunit (TC 1.A.1.11) family. CACNA1C subfamily. Component of a calcium channel complex consisting of a pore-forming alpha subunit (CACNA1C) and ancillary beta, gamma and delta subunits. The channel complex contains alpha, beta, gamma and delta subunits in a 1:1:1:1 ratio, i.e. it contains only one of each type of subunit. CACNA1C channel activity is modulated by ancillary subunits, such as CACNB1, CACNB2, CACNB3, CACNA2D1 and CACNA2D4. Interacts with the gamma subunits CACNG4, CACNG6, CACNG7 and CACNG8. Interacts with CACNB1. Interacts with CACNB2. Identified in a complex with CACNA2D4 and CACNB3. Interacts with CACNB3. Interacts with CACNA2D1. Interacts with CACNA2D4. Interacts with CALM1. Interacts (via the N-terminus and the C-terminal C and IQ motifs) with CABP1; this inhibits Ca(2+)-dependent channel inactivation. The binding via the C motif is calcium independent whereas the binding via IQ requires the presence of calcium and is mutually exclusive with calmodulin binding. The binding to the cytoplasmic N-terminal domain is calcium independent but is essential for the channel modulation. Interacts (via C-terminal CDB motif) with CABP5; in a calcium-dependent manner. Interacts with CIB1; the interaction increases upon cardiomyocytes hypertrophy. Interacts with STAC2 and STAC3; this inhibits channel inactivation. In terms of processing, phosphorylation by PKA at Ser-1927 activates the channel. Elevated levels of blood glucose lead to increased phosphorylation by PKA. Is also phosphorylated in vitro by CaM-kinase II, PKC and CGPK. In terms of tissue distribution, detected in hippocampus and brain cortex, on neuronal cell bodies and dendrites, and in post-synaptic density in brain (at protein level). Isoforms 4 and 5 are expressed throughout the central nervous system, with highest levels in the olfactory bulb and cerebellum. Also expressed in heart, pituitary, adrenal gland, liver, kidney, and in a much lesser extent in testes and spleen.

The protein localises to the cell membrane. The protein resides in the sarcolemma. It is found in the perikaryon. Its subcellular location is the postsynaptic density membrane. It localises to the cell projection. The protein localises to the dendrite. The protein resides in the T-tubule. The catalysed reaction is Ca(2+)(in) = Ca(2+)(out). With respect to regulation, inhibited by dihydropyridines (DHP), such as isradipine. Inhibited by nifedipine. Channel activity is regulated by Ca(2+) and calmodulin. Binding of STAC1, STAC2 or STAC3 to a region that overlaps with the calmodulin binding site inhibits channel inactivation by Ca(2+) and calmodulin. Binding of calmodulin or CABP1 at the same regulatory sites results in opposite effects on the channel function. Shear stress and pressure increases calcium channel activity. Functionally, pore-forming, alpha-1C subunit of the voltage-gated calcium channel that gives rise to L-type calcium currents. Mediates influx of calcium ions into the cytoplasm, and thereby triggers calcium release from the sarcoplasm. Plays an important role in excitation-contraction coupling in the heart. Required for normal heart development and normal regulation of heart rhythm. Required for normal contraction of smooth muscle cells in blood vessels and in the intestine. Essential for normal blood pressure regulation via its role in the contraction of arterial smooth muscle cells. Long-lasting (L-type) calcium channels belong to the 'high-voltage activated' (HVA) group. The chain is Voltage-dependent L-type calcium channel subunit alpha-1C (Cacna1c) from Rattus norvegicus (Rat).